A 436-amino-acid chain; its full sequence is Methylenetetrahydrofolate--tRNA-(uracil-5-)-methyltransferase TrmFO (436 aa).

10 to 15 contributes to the FAD binding site; it reads GAGLAG.

The protein belongs to the MnmG family. TrmFO subfamily. FAD serves as cofactor.

The protein localises to the cytoplasm. The enzyme catalyses uridine(54) in tRNA + (6R)-5,10-methylene-5,6,7,8-tetrahydrofolate + NADH + H(+) = 5-methyluridine(54) in tRNA + (6S)-5,6,7,8-tetrahydrofolate + NAD(+). It carries out the reaction uridine(54) in tRNA + (6R)-5,10-methylene-5,6,7,8-tetrahydrofolate + NADPH + H(+) = 5-methyluridine(54) in tRNA + (6S)-5,6,7,8-tetrahydrofolate + NADP(+). In terms of biological role, catalyzes the folate-dependent formation of 5-methyl-uridine at position 54 (M-5-U54) in all tRNAs. The protein is Methylenetetrahydrofolate--tRNA-(uracil-5-)-methyltransferase TrmFO of Exiguobacterium sp. (strain ATCC BAA-1283 / AT1b).